A 96-amino-acid polypeptide reads, in one-letter code: Co-chaperonin GroES (96 aa).

This sequence belongs to the GroES chaperonin family. As to quaternary structure, heptamer of 7 subunits arranged in a ring. Interacts with the chaperonin GroEL.

The protein resides in the cytoplasm. Together with the chaperonin GroEL, plays an essential role in assisting protein folding. The GroEL-GroES system forms a nano-cage that allows encapsulation of the non-native substrate proteins and provides a physical environment optimized to promote and accelerate protein folding. GroES binds to the apical surface of the GroEL ring, thereby capping the opening of the GroEL channel. The sequence is that of Co-chaperonin GroES from Allochromatium vinosum (Chromatium vinosum).